We begin with the raw amino-acid sequence, 144 residues long: Oxoglutarate dehydrogenase inhibitor (144 aa).

Position 14 is a phosphothreonine (threonine 14). Residues 68 to 117 form the FHA domain; the sequence is TAAGRHPDSDIFLDDVTVSRRHAEFRRNGDQYEVVDVGSLNGTYVNREPK.

The protein localises to the cytoplasm. An essential component of the PknG signaling pathway. When unphosphorylated, it inhibits the activity of 2-oxoglutarate dehydrogenase. When phosphorylated it does not inhibit 2-oxoglutarate dehydrogenase. In Corynebacterium jeikeium (strain K411), this protein is Oxoglutarate dehydrogenase inhibitor (odhI).